The chain runs to 133 residues: Ribonuclease VapC29 (133 aa).

The PINc domain maps to 3–122; it reads VLLDANVLIA…TLDSGLAHLH (120 aa). Residues Asp6 and Asp97 each coordinate Mg(2+).

This sequence belongs to the PINc/VapC protein family. Requires Mg(2+) as cofactor.

In terms of biological role, toxic component of a type II toxin-antitoxin (TA) system. Its cognate antitoxin is VapB29. Has ribonuclease activity. In Mycobacterium tuberculosis (strain CDC 1551 / Oshkosh), this protein is Ribonuclease VapC29.